We begin with the raw amino-acid sequence, 510 residues long: Calcium-dependent lipid-binding protein (510 aa).

The helical transmembrane segment at 1-21 (MGLISGILFGIIFGVALMAGW) threads the bilayer. SMP-LTD domains are found at residues 66 to 248 (AFEQ…VPIG) and 66 to 250 (AFEQ…IGGI). Residues 226 to 488 (DDTVDTIVKD…FMGRTITGQS (263 aa)) form a phospholipid binding region. C2 domains lie at 242–362 (RIVV…ELEL) and 246–364 (PIGG…ELNL). The Ca(2+) site is built by lysine 278, glutamate 279, aspartate 285, aspartate 333, lysine 334, aspartate 335, aspartate 339, and glutamate 340. A coiled-coil region spans residues 390–417 (EFNKEEQMAALEDEKKIMEERKRLKEAG). The region spanning 461–500 (MVGSGFGAVGSGLSKAGRFMGRTITGQSSKRSGSSTPVNT) is the C2 3 domain. Positions 484 to 510 (ITGQSSKRSGSSTPVNTVPENDGAKQQ) are disordered.

The protein belongs to the synaptotagmin family. In terms of assembly, interacts with the biotrophic pathogenic fungi Microbotryum violaceum effector MVLG_01732. Ca(2+) is required as a cofactor. In terms of tissue distribution, mostly expressed in rosette leaves and flowers, to lower extent, in cauline leaves, roots and stems, and, at low levels, in siliques.

The protein localises to the nucleus membrane. In terms of biological role, may be involved in membrane trafficking. Acts as a repressor of abiotic stress (e.g. drought and salt) responses by binding specifically to the promoter of THAS1 to regulate its transcription. Binds to membrane lipid ceramides. This Arabidopsis thaliana (Mouse-ear cress) protein is Calcium-dependent lipid-binding protein.